The chain runs to 194 residues: Imidazoleglycerol-phosphate dehydratase (194 aa).

The protein belongs to the imidazoleglycerol-phosphate dehydratase family.

It is found in the cytoplasm. The enzyme catalyses D-erythro-1-(imidazol-4-yl)glycerol 3-phosphate = 3-(imidazol-4-yl)-2-oxopropyl phosphate + H2O. It functions in the pathway amino-acid biosynthesis; L-histidine biosynthesis; L-histidine from 5-phospho-alpha-D-ribose 1-diphosphate: step 6/9. This Oceanobacillus iheyensis (strain DSM 14371 / CIP 107618 / JCM 11309 / KCTC 3954 / HTE831) protein is Imidazoleglycerol-phosphate dehydratase.